Reading from the N-terminus, the 527-residue chain is Putative ABC transporter peptide-binding protein BOV_A0352 (527 aa).

An N-terminal signal peptide occupies residues 1-23; that stretch reads MRLRNFYSALALSAAVFAGPLYA.

The protein belongs to the bacterial solute-binding protein 5 family. In terms of assembly, the complex is composed of two ATP-binding proteins (BOV_A0347 and BOV_A0348), two transmembrane proteins (BOV_A0350 and BOV_A0351) and a solute-binding protein (BOV_A0352).

It localises to the periplasm. Functionally, probably part of an ABC transporter complex that could be involved in peptide import. This Brucella ovis (strain ATCC 25840 / 63/290 / NCTC 10512) protein is Putative ABC transporter peptide-binding protein BOV_A0352.